Here is a 192-residue protein sequence, read N- to C-terminus: UPF0462 protein C4orf33 homolog (192 aa).

This sequence belongs to the UPF0462 family.

This chain is UPF0462 protein C4orf33 homolog (D3Ertd751e), found in Mus musculus (Mouse).